The sequence spans 369 residues: Outer membrane porin F (369 aa).

Positions 1–21 (MKRNILAVVIPALLVAGTANA) are cleaved as a signal peptide. The beta stranded transmembrane segment at 22–27 (AEIFNK) threads the bilayer. Residue Asp-28 is a topological domain, periplasmic. The chain crosses the membrane as a beta stranded span at residues 29-44 (GNKLDLYGKVDVRHQF). Residues 45–55 (ADKRSSEDGDD) lie on the Extracellular side of the membrane. A beta stranded transmembrane segment spans residues 56–68 (SYARIGIKGETQI). The Periplasmic segment spans residues 69-70 (SD). Residues 71–83 (QLTGFGRWEYNVK) traverse the membrane as a beta stranded segment. Topologically, residues 84 to 97 (AKGTEAAVAESSTR) are extracellular. A beta stranded transmembrane segment spans residues 98 to 106 (LAFAGLKFA). Topologically, residues 107–108 (NY) are periplasmic. Residues 109–115 (GSLDYGR) traverse the membrane as a beta stranded segment. Residues 116–150 (NYGVNYDVNAWTDVLPIFGGDAMAQTDNFMTGRST) lie on the Extracellular side of the membrane. A beta stranded membrane pass occupies residues 151–157 (GLLTYRN). Topologically, residues 158 to 165 (TDFFGLVD) are periplasmic. Residues 166-177 (GLNFALQYQGQN) form a beta stranded membrane-spanning segment. The Extracellular portion of the chain corresponds to 178 to 193 (SDRTKNKGRDTERSNG). A beta stranded membrane pass occupies residues 194–204 (DGYGLSSTYDV). The Periplasmic segment spans residues 205–206 (GY). A beta stranded transmembrane segment spans residues 207-219 (GITVGGSYANSAR). The Extracellular segment spans residues 220–234 (TADQKEKVSDAYGKR). A beta stranded transmembrane segment spans residues 235–246 (AEAWNIGAKYDA). Asn-247 is a topological domain (periplasmic). Residues 248 to 259 (NVYLAAMYGETR) form a beta stranded membrane-spanning segment. At 260 to 278 (NMTRYTRTIADTDATLIAN) the chain is on the extracellular side. Residues 279–291 (KTQNIELTAQYLF) traverse the membrane as a beta stranded segment. The Periplasmic segment spans residues 292–294 (SDL). Residues 295–308 (GLKPSLAYVQSKGK) form a beta stranded membrane-spanning segment. Residues 309-320 (DLTEGKGFNGDL) lie on the Extracellular side of the membrane. The chain crosses the membrane as a beta stranded span at residues 321-332 (VKYVSVGTYYYF). The Periplasmic portion of the chain corresponds to 333–334 (NK). Residues 335–344 (NLSTYVDYKI) traverse the membrane as a beta stranded segment. The Extracellular segment spans residues 345–359 (NLLKKDNELGVNARN). Residues 360–369 (VFGVGLTYQF) form a beta stranded membrane-spanning segment.

This sequence belongs to the Gram-negative porin family. As to quaternary structure, homotrimer.

Its subcellular location is the cell outer membrane. Forms pores that allow passive diffusion of small molecules across the outer membrane. The polypeptide is Outer membrane porin F (ompF) (Xenorhabdus nematophila (strain ATCC 19061 / DSM 3370 / CCUG 14189 / LMG 1036 / NCIMB 9965 / AN6)).